The primary structure comprises 414 residues: Calcium/calmodulin-dependent protein kinase cmkA (414 aa).

The Protein kinase domain occupies 23 to 278 (YRFGRTLGAG…SEEALKHPWL (256 aa)). ATP contacts are provided by residues 29–37 (LGAGTYGIV) and Lys50. Catalysis depends on Asp142, which acts as the Proton acceptor. Positions 278–314 (LKGESASDRDLLPEIRAYIARSRLKRGIEIIKLANRI) are autoinhibitory domain. The calmodulin-binding stretch occupies residues 293–315 (RAYIARSRLKRGIEIIKLANRIE). Disordered regions lie at residues 320-375 (QEED…KRSL) and 394-414 (EMKENEEREKVEREARERAHS). Polar residues predominate over residues 351–364 (STENSNTHPASTGN).

It belongs to the protein kinase superfamily. CAMK Ser/Thr protein kinase family. CaMK subfamily. As to quaternary structure, monomer. Autophosphorylated in a calcium/calmodulin-dependent manner.

It carries out the reaction L-seryl-[protein] + ATP = O-phospho-L-seryl-[protein] + ADP + H(+). The catalysed reaction is L-threonyl-[protein] + ATP = O-phospho-L-threonyl-[protein] + ADP + H(+). With respect to regulation, activated by Ca(2+)/calmodulin. Binding of calmodulin may relieve intrasteric autoinhibition. Its function is as follows. Calcium/calmodulin-dependent protein kinase. Required in nuclear division cycle for progression from G2 to mitosis. Required for hyphal growth. This is Calcium/calmodulin-dependent protein kinase cmkA (cmkA) from Emericella nidulans (strain FGSC A4 / ATCC 38163 / CBS 112.46 / NRRL 194 / M139) (Aspergillus nidulans).